The chain runs to 337 residues: CMP-N-acetylneuraminate-beta-galactosamide-alpha-2,3-sialyltransferase 1 (337 aa).

At 1-4 (MRRK) the chain is on the cytoplasmic side. The helical; Signal-anchor for type II membrane protein transmembrane segment at 5–25 (TLKYLTFFLLFIFLTSFVLNY) threads the bilayer. Topologically, residues 26–337 (SNTGVPSAWF…INKIRIFKGR (312 aa)) are lumenal. Disulfide bonds link C56–C61, C58–C136, and C139–C278. N76 carries an N-linked (GlcNAc...) asparagine glycan. Substrate is bound at residue Q102. Residue N109 is glycosylated (N-linked (GlcNAc...) asparagine). N144, N167, Y227, Y263, G267, G287, H296, and H313 together coordinate substrate. N320 carries an N-linked (GlcNAc...) asparagine glycan.

This sequence belongs to the glycosyltransferase 29 family. The soluble form derives from the membrane form by proteolytic processing. In terms of tissue distribution, highly expressed in submaxillary gland and to a much lesser extent in liver, lung, kidney, heart and brain.

It is found in the golgi apparatus. It localises to the golgi stack membrane. Its subcellular location is the trans-Golgi network membrane. The protein resides in the secreted. The enzyme catalyses a beta-D-galactosyl-(1-&gt;3)-N-acetyl-alpha-D-galactosaminyl derivative + CMP-N-acetyl-beta-neuraminate = an N-acetyl-alpha-neuraminyl-(2-&gt;3)-beta-D-galactosyl-(1-&gt;3)-N-acetyl-alpha-D-galactosaminyl derivative + CMP + H(+). The catalysed reaction is a ganglioside GM1 (d18:1(4E)) + CMP-N-acetyl-beta-neuraminate = a ganglioside GD1a (d18:1(4E)) + CMP + H(+). It catalyses the reaction ganglioside GM1 (d18:1(4E)/18:0) + CMP-N-acetyl-beta-neuraminate = ganglioside GD1a (18:1(4E)/18:0) + CMP + H(+). It carries out the reaction a ganglioside GA1 + CMP-N-acetyl-beta-neuraminate = a ganglioside GM1b + CMP + H(+). The enzyme catalyses a ganglioside GA1 (d18:1(4E)) + CMP-N-acetyl-beta-neuraminate = a ganglioside GM1b (d18:1(4E)) + CMP + H(+). The catalysed reaction is a ganglioside GD1b + CMP-N-acetyl-beta-neuraminate = a ganglioside GT1b + CMP + H(+). It catalyses the reaction a 3-O-[beta-D-galactosyl-(1-&gt;3)-N-acetyl-alpha-D-galactosaminyl]-L-threonyl-[protein] + CMP-N-acetyl-beta-neuraminate = a 3-O-[N-acetyl-alpha-neuraminyl-(2-&gt;3)-beta-D-galactosyl-(1-&gt;3)-N-acetyl-alpha-D-galactosaminyl]-L-threonyl-[protein] + CMP + H(+). It carries out the reaction a 3-O-[beta-D-galactosyl-(1-&gt;3)-N-acetyl-alpha-D-galactosaminyl]-L-seryl-[protein] + CMP-N-acetyl-beta-neuraminate = 3-O-[N-acetyl-alpha-neuraminyl-(2-&gt;3)-beta-D-galactosyl-(1-&gt;3)-N-acetyl-alpha-D-galactosaminyl]-L-seryl-[protein] + CMP + H(+). It participates in protein modification; protein glycosylation. It functions in the pathway glycolipid biosynthesis. A beta-galactoside alpha2-&gt;3 sialyltransferase involved in terminal sialylation of glycoproteins and glycolipids. Catalyzes the transfer of sialic acid (N-acetyl-neuraminic acid; Neu5Ac) from the nucleotide sugar donor CMP-Neu5Ac onto acceptor Galbeta-(1-&gt;3)-GalNAc-terminated glycoconjugates through an alpha2-3 linkage. Adds sialic acid to the core 1 O-glycan, Galbeta-(1-&gt;3)-GalNAc-O-Ser/Thr, which is a major structure of mucin-type O-glycans. As part of a homeostatic mechanism that regulates CD8-positive T cell numbers, sialylates core 1 O-glycans of T cell glycoproteins, SPN/CD43 and PTPRC/CD45. Prevents premature apoptosis of thymic CD8-positive T cells prior to peripheral emigration, whereas in the secondary lymphoid organs controls the survival of CD8-positive memory T cells generated following a successful immune response. Transfers sialic acid to asialofetuin, presumably onto Galbeta-(1-&gt;3)-GalNAc-O-Ser. Sialylates GM1a, GA1 and GD1b gangliosides to form GD1a, GM1b and GT1b, respectively. This is CMP-N-acetylneuraminate-beta-galactosamide-alpha-2,3-sialyltransferase 1 (St3gal1) from Mus musculus (Mouse).